Here is a 282-residue protein sequence, read N- to C-terminus: Phosphatidylserine decarboxylase proenzyme (282 aa).

Catalysis depends on charge relay system; for autoendoproteolytic cleavage activity residues Asp-88, His-144, and Ser-247. Ser-247 (schiff-base intermediate with substrate; via pyruvic acid; for decarboxylase activity) is an active-site residue. Pyruvic acid (Ser); by autocatalysis is present on Ser-247.

The protein belongs to the phosphatidylserine decarboxylase family. PSD-B subfamily. Prokaryotic type I sub-subfamily. In terms of assembly, heterodimer of a large membrane-associated beta subunit and a small pyruvoyl-containing alpha subunit. Requires pyruvate as cofactor. Is synthesized initially as an inactive proenzyme. Formation of the active enzyme involves a self-maturation process in which the active site pyruvoyl group is generated from an internal serine residue via an autocatalytic post-translational modification. Two non-identical subunits are generated from the proenzyme in this reaction, and the pyruvate is formed at the N-terminus of the alpha chain, which is derived from the carboxyl end of the proenzyme. The autoendoproteolytic cleavage occurs by a canonical serine protease mechanism, in which the side chain hydroxyl group of the serine supplies its oxygen atom to form the C-terminus of the beta chain, while the remainder of the serine residue undergoes an oxidative deamination to produce ammonia and the pyruvoyl prosthetic group on the alpha chain. During this reaction, the Ser that is part of the protease active site of the proenzyme becomes the pyruvoyl prosthetic group, which constitutes an essential element of the active site of the mature decarboxylase.

The protein localises to the cell membrane. The catalysed reaction is a 1,2-diacyl-sn-glycero-3-phospho-L-serine + H(+) = a 1,2-diacyl-sn-glycero-3-phosphoethanolamine + CO2. It participates in phospholipid metabolism; phosphatidylethanolamine biosynthesis; phosphatidylethanolamine from CDP-diacylglycerol: step 2/2. In terms of biological role, catalyzes the formation of phosphatidylethanolamine (PtdEtn) from phosphatidylserine (PtdSer). In Xanthomonas campestris pv. campestris (strain B100), this protein is Phosphatidylserine decarboxylase proenzyme.